Reading from the N-terminus, the 151-residue chain is Deoxyuridine 5'-triphosphate nucleotidohydrolase (151 aa).

Mg(2+) is bound at residue arginine 28. DUTP contacts are provided by residues 72–74, 86–89, tyrosine 92, glycine 97, isoleucine 99, and arginine 115; these read PRS and GVID.

It belongs to the dUTPase family. Mg(2+) is required as a cofactor.

It catalyses the reaction dUTP + H2O = dUMP + diphosphate + H(+). This enzyme is involved in nucleotide metabolism: it produces dUMP, the immediate precursor of thymidine nucleotides and it decreases the intracellular concentration of dUTP so that uracil cannot be incorporated into DNA. The sequence is that of Deoxyuridine 5'-triphosphate nucleotidohydrolase (OPG046) from Monkeypox virus.